The chain runs to 45 residues: Photosystem II reaction center protein K (45 aa).

Positions 1 to 8 (MEAALLLA) are excised as a propeptide. The chain crosses the membrane as a helical span at residues 24 to 44 (LPLIPLFFLLLAFVWQAAVGF).

Belongs to the PsbK family. PSII is composed of 1 copy each of membrane proteins PsbA, PsbB, PsbC, PsbD, PsbE, PsbF, PsbH, PsbI, PsbJ, PsbK, PsbL, PsbM, PsbT, PsbX, PsbY, PsbZ, Psb30/Ycf12, peripheral proteins PsbO, CyanoQ (PsbQ), PsbU, PsbV and a large number of cofactors. It forms dimeric complexes.

It localises to the cellular thylakoid membrane. Its function is as follows. One of the components of the core complex of photosystem II (PSII). PSII is a light-driven water:plastoquinone oxidoreductase that uses light energy to abstract electrons from H(2)O, generating O(2) and a proton gradient subsequently used for ATP formation. It consists of a core antenna complex that captures photons, and an electron transfer chain that converts photonic excitation into a charge separation. This Picosynechococcus sp. (strain ATCC 27264 / PCC 7002 / PR-6) (Agmenellum quadruplicatum) protein is Photosystem II reaction center protein K.